The sequence spans 344 residues: N-acetyl-gamma-glutamyl-phosphate reductase (344 aa).

Cysteine 150 is an active-site residue.

The protein belongs to the NAGSA dehydrogenase family. Type 1 subfamily.

The protein localises to the cytoplasm. The enzyme catalyses N-acetyl-L-glutamate 5-semialdehyde + phosphate + NADP(+) = N-acetyl-L-glutamyl 5-phosphate + NADPH + H(+). It functions in the pathway amino-acid biosynthesis; L-arginine biosynthesis; N(2)-acetyl-L-ornithine from L-glutamate: step 3/4. Its function is as follows. Catalyzes the NADPH-dependent reduction of N-acetyl-5-glutamyl phosphate to yield N-acetyl-L-glutamate 5-semialdehyde. The sequence is that of N-acetyl-gamma-glutamyl-phosphate reductase from Pseudomonas aeruginosa (strain ATCC 15692 / DSM 22644 / CIP 104116 / JCM 14847 / LMG 12228 / 1C / PRS 101 / PAO1).